We begin with the raw amino-acid sequence, 92 residues long: Small ribosomal subunit protein uS19 (92 aa).

This sequence belongs to the universal ribosomal protein uS19 family.

In terms of biological role, protein S19 forms a complex with S13 that binds strongly to the 16S ribosomal RNA. This Mycoplasmopsis synoviae (strain 53) (Mycoplasma synoviae) protein is Small ribosomal subunit protein uS19.